Consider the following 597-residue polypeptide: MPDQTTSTHLFAHILARVHAVCAALTDEGALPTGTDLSRIVVEPPKDASHGDMATNAAMVLAKDAKAKPRDLAEKIAEKLRAEDQIDTVSIAGPGFINLTLKPAVWAEALRAVLDAGAGYGRSRVGGAEKVNIEYVSANPTGPMHVGHCRGAVFGDALANLLETAGYDVTREYYINDAGAQVDVLARSAFLRYREALGEDIGAIPEGLYPGDYLVPVGTALVAEHGAALKELPEPQWLPMVRAKSIAMMMEMIKADLAALAITHEVFFSERSLIEGERNRVADTIDFLRAKGDVYQGRLPPPKGAPVEDYEDREQTLFRATAYGDDVDRPLLKSDGTYTYFASDIAYHKVKFDAGFGNMVDVWGADHGGYIKRMQAAITAVTSGKGALDVKIVQLVRLLRNGEPVKMSKRSGDFVTLREVVDEVGSDAVRFMMLFRKNDAVLDFDLAKVIEQSKDNPVFYVQYGHARGHSIFRNAKELFPDLPDATEARIAFLKDANAERLTDPSELDLLRRLALFPRTVEAAALAHEPHRVAFYLYDLASEFHALWTRGRDLPHLRFIINNDAEITKARLAMVQGVVSVLASGLAILGVTAPDEMR.

The 'HIGH' region motif lies at 138 to 148 (ANPTGPMHVGH).

This sequence belongs to the class-I aminoacyl-tRNA synthetase family. As to quaternary structure, monomer.

Its subcellular location is the cytoplasm. It catalyses the reaction tRNA(Arg) + L-arginine + ATP = L-arginyl-tRNA(Arg) + AMP + diphosphate. This is Arginine--tRNA ligase from Rhodopseudomonas palustris (strain HaA2).